The following is an 87-amino-acid chain: DNA-directed RNA polymerase subunit omega (87 aa).

It belongs to the RNA polymerase subunit omega family. As to quaternary structure, the RNAP catalytic core consists of 2 alpha, 1 beta, 1 beta' and 1 omega subunit. When a sigma factor is associated with the core the holoenzyme is formed, which can initiate transcription.

It carries out the reaction RNA(n) + a ribonucleoside 5'-triphosphate = RNA(n+1) + diphosphate. Promotes RNA polymerase assembly. Latches the N- and C-terminal regions of the beta' subunit thereby facilitating its interaction with the beta and alpha subunits. The chain is DNA-directed RNA polymerase subunit omega from Pseudomonas fluorescens (strain ATCC BAA-477 / NRRL B-23932 / Pf-5).